A 186-amino-acid chain; its full sequence is Peptidyl-tRNA hydrolase (186 aa).

Tyr-16 is a tRNA binding site. The Proton acceptor role is filled by His-21. Positions 66, 68, and 114 each coordinate tRNA.

This sequence belongs to the PTH family. Monomer.

It is found in the cytoplasm. The catalysed reaction is an N-acyl-L-alpha-aminoacyl-tRNA + H2O = an N-acyl-L-amino acid + a tRNA + H(+). Functionally, hydrolyzes ribosome-free peptidyl-tRNAs (with 1 or more amino acids incorporated), which drop off the ribosome during protein synthesis, or as a result of ribosome stalling. Its function is as follows. Catalyzes the release of premature peptidyl moieties from peptidyl-tRNA molecules trapped in stalled 50S ribosomal subunits, and thus maintains levels of free tRNAs and 50S ribosomes. This chain is Peptidyl-tRNA hydrolase, found in Ureaplasma urealyticum serovar 10 (strain ATCC 33699 / Western).